Reading from the N-terminus, the 72-residue chain is Probable neurotoxin pcD-993 (72 aa).

The signal sequence occupies residues 1–19 (MNYLVMISFALLLVIGVES). Positions 21-72 (RDGYFVEPDNCVVHCMPSSEMCDRGCKHNGATSGSCKAFSKGGNACWCKGLR) constitute an LCN-type CS-alpha/beta domain. Intrachain disulfides connect Cys-35–Cys-56, Cys-42–Cys-66, and Cys-46–Cys-68. A propeptide (removed by a carboxypeptidase) is located at residue Arg-72.

It belongs to the long (3 C-C) scorpion toxin superfamily. Expressed by the venom gland.

It is found in the secreted. The sequence is that of Probable neurotoxin pcD-993 from Androctonus australis (Sahara scorpion).